A 265-amino-acid chain; its full sequence is 14-3-3-like protein GF14-D (265 aa).

Residues 244-265 are disordered; the sequence is DANDDGGDEIKEAAAPKEPGDQ. The segment covering 251–265 has biased composition (basic and acidic residues); that stretch reads DEIKEAAAPKEPGDQ.

It belongs to the 14-3-3 family. As to quaternary structure, interacts with BZR1. Interacts with ABI5.

Functionally, is associated with a DNA binding complex that binds to the G box, a well-characterized cis-acting DNA regulatory element found in plant genes. This Oryza sativa subsp. japonica (Rice) protein is 14-3-3-like protein GF14-D (GF14D).